A 165-amino-acid polypeptide reads, in one-letter code: Glycine cleavage system H protein, mitochondrial (165 aa).

The Lipoyl-binding domain occupies 57 to 139 (NAIVGISSYA…YEKGWLFKVD (83 aa)). Position 98 is an N6-lipoyllysine (K98).

This sequence belongs to the GcvH family. In terms of assembly, the glycine cleavage system is composed of four proteins: P, T, L and H. It depends on (R)-lipoate as a cofactor.

The protein localises to the mitochondrion. Functionally, the glycine cleavage system catalyzes the degradation of glycine. The H protein shuttles the methylamine group of glycine from the P protein to the T protein. The sequence is that of Glycine cleavage system H protein, mitochondrial (ppl) from Drosophila melanogaster (Fruit fly).